A 116-amino-acid chain; its full sequence is Phosphoribosyl-AMP cyclohydrolase (116 aa).

Aspartate 85 contributes to the Mg(2+) binding site. Cysteine 86 provides a ligand contact to Zn(2+). 2 residues coordinate Mg(2+): aspartate 87 and aspartate 89. Zn(2+) is bound by residues cysteine 102 and cysteine 109.

It belongs to the PRA-CH family. As to quaternary structure, homodimer. The cofactor is Mg(2+). Requires Zn(2+) as cofactor.

The protein localises to the cytoplasm. It catalyses the reaction 1-(5-phospho-beta-D-ribosyl)-5'-AMP + H2O = 1-(5-phospho-beta-D-ribosyl)-5-[(5-phospho-beta-D-ribosylamino)methylideneamino]imidazole-4-carboxamide. Its pathway is amino-acid biosynthesis; L-histidine biosynthesis; L-histidine from 5-phospho-alpha-D-ribose 1-diphosphate: step 3/9. Functionally, catalyzes the hydrolysis of the adenine ring of phosphoribosyl-AMP. The protein is Phosphoribosyl-AMP cyclohydrolase of Thermobifida fusca (strain YX).